Consider the following 1502-residue polypeptide: MMAKNKEPRPPSYTISIVGLSGTEKDKGNCGVGKSCLCNRFVRSKADEYYPEHTSVLSTIDFGGRVVNNDHFLYWGDIIQNSEDGVECKIHVIEQTEFIDDQTFLPHRSTNLQPYIKRAAASKLQSAEKLMYICTDQLGLEQDFEQKQMPEGKLNVDGFLLCIDVSQGCNRKFDDQLKFVNNLFVQLSKSKKPVIIAATKCDECVDHYLREVQAFASNKKNLLVVETSARFNVNIETCFTALVQMLDKTRSKPKIIPYLDAYKTQRQLVVTATDKFEKLVQTVRDYHATWKTVSNKLKNHPDYEEYINLEGTRKARNTFSKHIEQLKQEHIRKRREEYINTLPRAFNTLLPNLEEIEHLNWSEALKLMEKRADFQLCFVVLEKTPWDETDHIDKINDRRIPFDLLSTLEAEKVYQNHVQHLISEKRRVEMKEKFKKTLEKIQFISPGQPWEEVMCFVMEDEAYKYITEADSKEVYGRHQREIVEKAKEEFQEMLFEHSELFYDLDLNATPSSDKMSEIHTVLSEEPRYKALQKLAPDRESLLLKHIGFVYHPTKETCLSGQNCTDIKVEQLLASSLLQLDHGRLRLYHDSTNIDKVNLFILGKDGLAQELANEIRTQSTDDEYALDGKIYELDLRPVDAKSPYFLSQLWTAAFKPHGCFCVFNSIESLSFIGEFIGKIRTEASQIRKDKYMANLPFTLILANQRDSISKNLPILRHQGQQLANKLQCPFVDVPAGTYPRKFNETQIKQALRGVLESVKHNLDVVSPIPANKDLSEADLRIVMCAMCGDPFSVDLILSPFLDSHSCSAAQAGQNNSLMLDKIIGEKRRRIQITILSYHSSIGVRKDELVHGYILVYSAKRKASMGMLRAFLSEVQDTIPVQLVAVTDSQADFFENEAIKELMTEGEHIATEITAKFTALYSLSQYHRQTEVFTLFFSDVLEKKNMIENSYLSDNTRESTHQSEDVFLPSPRDCFPYNNYPDSDDDTEAPPPYSPIGDDVQLLPTPSDRSRYRLDLEGNEYPIHSTPNCHDHERNHKVPPPIKPKPVVPKTNVKKLDPNLLKTIEAGIGKNPRKQTSRVPLAHPEDMDPSDNYAEPIDTIFKQKGYSDEIYVVPDDSQNRIKIRNSFVNNTQGDEENGFSDRTSKSHGERRPSKYKYKSKTLFSKAKSYYRRTHSDASDDEAFTTSKTKRKGRHRGSEEDPLLSPVETWKGGIDNPAITSDQELDDKKMKKKTHKVKEDKKQKKKTKNFNPPTRRNWESNYFGMPLQDLVTAEKPIPLFVEKCVEFIEDTGLCTEGLYRVSGNKTDQDNIQKQFDQDHNINLVSMEVTVNAVAGALKAFFADLPDPLIPYSLHPELLEAAKIPDKTERLHALKEIVKKFHPVNYDVFRYVITHLNRVSQQHKINLMTADNLSICFWPTLMRPDFENREFLSTTKIHQSVVETFIQQCQFFFYNGEIVETTNIVAPPPPSNPGQLVEPMVPLQLPPPLQPQLIQPQLQTDPLGII.

4 consecutive FF domains span residues glutamine 267–glutamine 325, lysine 366–histidine 420, arginine 427–glutamate 481, and isoleucine 482–phenylalanine 548. Tyrosine 550 is subject to 3'-nitrotyrosine. A phosphoserine mark is found at serine 590 and serine 765. Residues serine 590 to valine 763 form the pG1 pseudoGTPase domain. A pG2 pseudoGTPase domain is found at arginine 779 to methionine 944. A phosphoserine mark is found at serine 951 and serine 968. 3 disordered regions span residues tyrosine 975 to proline 1004, histidine 1022 to asparagine 1050, and asparagine 1069 to aspartate 1089. The segment covering valine 1036–valine 1045 has biased composition (pro residues). Serine 1115 carries the post-translational modification Phosphoserine. 2 disordered regions span residues phenylalanine 1125 to lysine 1156 and tyrosine 1168 to asparagine 1254. The span at arginine 1140–proline 1150 shows a compositional bias: basic and acidic residues. A phosphoserine mark is found at serine 1173, serine 1176, serine 1195, serine 1202, and serine 1218. A Rho-GAP domain is found at methionine 1262–phenylalanine 1449.

In terms of assembly, may interact with RASA1/p120GAP. Detected in skin fibroblasts (at protein level).

It localises to the cytoplasm. Its subcellular location is the cell membrane. GTPase-activating protein for Rho family members. This Homo sapiens (Human) protein is Rho GTPase-activating protein 5 (ARHGAP5).